The chain runs to 244 residues: Large ribosomal subunit protein bL25 (244 aa).

The interval 197-244 is disordered; sequence ADVEAEAAEAALAKEAATEAAEEEETEKPASEAEASGEAEQADTDKKE. A compositionally biased stretch (low complexity) spans 204 to 215; the sequence is AEAALAKEAATE.

It belongs to the bacterial ribosomal protein bL25 family. CTC subfamily. As to quaternary structure, part of the 50S ribosomal subunit; part of the 5S rRNA/L5/L18/L25 subcomplex. Contacts the 5S rRNA. Binds to the 5S rRNA independently of L5 and L18.

Functionally, this is one of the proteins that binds to the 5S RNA in the ribosome where it forms part of the central protuberance. The polypeptide is Large ribosomal subunit protein bL25 (Coxiella burnetii (strain CbuK_Q154) (Coxiella burnetii (strain Q154))).